Reading from the N-terminus, the 164-residue chain is Protein-export protein SecB (164 aa).

This sequence belongs to the SecB family. Homotetramer, a dimer of dimers. One homotetramer interacts with 1 SecA dimer.

It localises to the cytoplasm. Its function is as follows. One of the proteins required for the normal export of preproteins out of the cell cytoplasm. It is a molecular chaperone that binds to a subset of precursor proteins, maintaining them in a translocation-competent state. It also specifically binds to its receptor SecA. This chain is Protein-export protein SecB, found in Orientia tsutsugamushi (strain Ikeda) (Rickettsia tsutsugamushi).